The sequence spans 378 residues: Acetylornithine deacetylase (378 aa).

His-76 contacts Zn(2+). The active site involves Asp-78. Residue Asp-108 participates in Zn(2+) binding. Glu-140 is a catalytic residue. 3 residues coordinate Zn(2+): Glu-141, Glu-165, and His-351.

This sequence belongs to the peptidase M20A family. ArgE subfamily. In terms of assembly, homodimer. Zn(2+) is required as a cofactor. Co(2+) serves as cofactor. Requires glutathione as cofactor.

Its subcellular location is the cytoplasm. It carries out the reaction N(2)-acetyl-L-ornithine + H2O = L-ornithine + acetate. It participates in amino-acid biosynthesis; L-arginine biosynthesis; L-ornithine from N(2)-acetyl-L-ornithine (linear): step 1/1. Its function is as follows. Catalyzes the hydrolysis of the amide bond of N(2)-acetylated L-amino acids. Cleaves the acetyl group from N-acetyl-L-ornithine to form L-ornithine, an intermediate in L-arginine biosynthesis pathway, and a branchpoint in the synthesis of polyamines. The protein is Acetylornithine deacetylase of Aliivibrio salmonicida (strain LFI1238) (Vibrio salmonicida (strain LFI1238)).